A 501-amino-acid chain; its full sequence is MMPQYERKQIIIHISCVIICVVVTLTLFHVFWNDNYIAVDVNYDVPYNFSVSPDFGFNTTNITWSLKPYYKYDINDLMNTANSVFKIWSRTGLNFTYIKNVDEAMVRIYFYRQDHNDSFPFDGKGKILGHAFYPNRHRINRGLAGEVHIDADEQFYFNDKLENMSEYDDSINLHAILLHEVGHAIGLLHSANKSSIMYPYYGGSKLGVDDFNGIQQIYFANKYKHNKIFTYNKYHKLETTSSSTPSYYGNRDRYPINKKRSLSSVFNITTTTVKPSYDKNNTFTPQKICFNITSSYKTHNTKLTAIRKYCTGHIDTISVIRGELYIFVDEYHWRFRSNGLLYSGYPLKTTHSWSVPIIGRFKVTSAFETLTGDIVIGVNYTTFYYFDRMSMQLYRMQKLPLHLLPRCRSTKKTIVFSIDSHLYALCDRIIREIDFNSLRMKRMKTKRSMLGFPLVSNLITVLDHDGIYLFRNDNTYAEVIRSRVDSSSSYFKNNTDKWTIC.

The N-terminal stretch at 1–26 is a signal peptide; sequence MMPQYERKQIIIHISCVIICVVVTLT. 6 N-linked (GlcNAc...) asparagine; by host glycosylation sites follow: Asn48, Asn58, Asn61, Asn94, Asn116, and Asn163. His179 is a binding site for Zn(2+). Glu180 is a catalytic residue. The Zn(2+) site is built by His183 and His189. Asn192, Asn267, Asn280, and Asn291 each carry an N-linked (GlcNAc...) asparagine; by host glycan. A Hemopexin repeat occupies 311–356; the sequence is TGHIDTISVIRGELYIFVDEYHWRFRSNGLLYSGYPLKTTHSWSVP. Residues Asn379 and Asn493 are each glycosylated (N-linked (GlcNAc...) asparagine; by host).

The protein belongs to the peptidase M10A family. Requires Zn(2+) as cofactor.

The protein is Putative matrix metalloproteinase of Trichoplusia ni ascovirus 2c (TnAV-2c).